The primary structure comprises 390 residues: Magnesium-protoporphyrin IX monomethyl ester [oxidative] cyclase (390 aa).

The protein belongs to the AcsF family. The cofactor is Fe cation.

It catalyses the reaction Mg-protoporphyrin IX 13-monomethyl ester + 3 NADPH + 3 O2 + 2 H(+) = 3,8-divinyl protochlorophyllide a + 3 NADP(+) + 5 H2O. Its pathway is porphyrin-containing compound metabolism; chlorophyll biosynthesis (light-independent). In terms of biological role, catalyzes the formation of the isocyclic ring in chlorophyll biosynthesis. Mediates the cyclase reaction, which results in the formation of divinylprotochlorophyllide (Pchlide) characteristic of all chlorophylls from magnesium-protoporphyrin IX 13-monomethyl ester (MgPMME). The chain is Magnesium-protoporphyrin IX monomethyl ester [oxidative] cyclase from Prochlorococcus marinus (strain MIT 9312).